We begin with the raw amino-acid sequence, 265 residues long: Small ribosomal subunit protein uS2 (265 aa).

This sequence belongs to the universal ribosomal protein uS2 family.

In Aliarcobacter butzleri (strain RM4018) (Arcobacter butzleri), this protein is Small ribosomal subunit protein uS2.